Consider the following 228-residue polypeptide: Rab-like protein 2B (228 aa).

GTP contacts are provided by residues 28–35 (GDSAVGKS), 76–80 (DTAGQ), and 133–136 (NKID). Positions 200–228 (LEQEEEDVPDQEQSSSIETPSEEAASPHS) are disordered.

This sequence belongs to the small GTPase superfamily. Rab family. As to quaternary structure, interacts (in its GTP-bound form) with CEP19 (via residues 121-150); this interaction is required for its localization to the mother centriole and cilium basal body. Interacts (in its GTP-bound form) with the intraflagellar transport (IFT) complex B (via the IFT74-IFT81 heterodimer). Binding to CEP19 and the IFT74-IFT81 heterodimer is mutually exclusive. In terms of tissue distribution, expressed in the testis.

It localises to the cytoplasm. Its subcellular location is the cytoskeleton. It is found in the microtubule organizing center. The protein localises to the centrosome. The protein resides in the centriole. It localises to the cilium basal body. Functionally, small GTPase required for ciliation. Activated in a guanine nucleotide exchange factor (GEF)-independent manner via its intrinsic GDP for GTP nucleotide exchange ability. Involved in ciliary assembly by binding the intraflagellar transport (IFT) complex B from the large pool pre-docked at the base of the cilium and thus triggers its entry into the cilia. The sequence is that of Rab-like protein 2B (RABL2B) from Homo sapiens (Human).